We begin with the raw amino-acid sequence, 182 residues long: 3-hydroxyanthranilate 3,4-dioxygenase (182 aa).

R46 is a binding site for O2. Fe cation-binding residues include H50, E56, and H96. Position 56 (E56) interacts with substrate. Substrate-binding residues include R100 and E111. The Fe cation site is built by C126, C129, C163, and C166.

It belongs to the 3-HAO family. Homodimer. Fe(2+) is required as a cofactor.

The enzyme catalyses 3-hydroxyanthranilate + O2 = (2Z,4Z)-2-amino-3-carboxymuconate 6-semialdehyde. Its pathway is cofactor biosynthesis; NAD(+) biosynthesis; quinolinate from L-kynurenine: step 3/3. Catalyzes the oxidative ring opening of 3-hydroxyanthranilate to 2-amino-3-carboxymuconate semialdehyde, which spontaneously cyclizes to quinolinate. The chain is 3-hydroxyanthranilate 3,4-dioxygenase from Brucella anthropi (strain ATCC 49188 / DSM 6882 / CCUG 24695 / JCM 21032 / LMG 3331 / NBRC 15819 / NCTC 12168 / Alc 37) (Ochrobactrum anthropi).